The chain runs to 379 residues: Chaperone protein DnaJ (379 aa).

Positions 5–70 (DYYEVLGVQK…QKRAAYDRFG (66 aa)) constitute a J domain. The CR-type zinc-finger motif lies at 137–215 (GATTTVRVPT…CGGQGRVRKE (79 aa)). The Zn(2+) site is built by Cys-150, Cys-153, Cys-167, Cys-170, Cys-189, Cys-192, Cys-203, and Cys-206. CXXCXGXG motif repeat units lie at residues 150–157 (CESCNGTG), 167–174 (CPTCNGHG), 189–196 (CPACHGVG), and 203–210 (CRTCGGQG).

Belongs to the DnaJ family. In terms of assembly, homodimer. It depends on Zn(2+) as a cofactor.

The protein resides in the cytoplasm. In terms of biological role, participates actively in the response to hyperosmotic and heat shock by preventing the aggregation of stress-denatured proteins and by disaggregating proteins, also in an autonomous, DnaK-independent fashion. Unfolded proteins bind initially to DnaJ; upon interaction with the DnaJ-bound protein, DnaK hydrolyzes its bound ATP, resulting in the formation of a stable complex. GrpE releases ADP from DnaK; ATP binding to DnaK triggers the release of the substrate protein, thus completing the reaction cycle. Several rounds of ATP-dependent interactions between DnaJ, DnaK and GrpE are required for fully efficient folding. Also involved, together with DnaK and GrpE, in the DNA replication of plasmids through activation of initiation proteins. This chain is Chaperone protein DnaJ, found in Rhodospirillum centenum (strain ATCC 51521 / SW).